The chain runs to 256 residues: MKAELLLPLLGLQALLGAGTYFQTVTGFGLGMIVMGVTSGLGLAPVATVAAVVSLVTLANSACALPGKLQHIDWRAVAAAAIGILPSVVVGVLVLEYLSSSAATLLQLLLGAVILYGGLSAALKPAPLAQRSGDGTFFVSGVFGGLLSGMFGVSGPPLIFQFYRQPMKPVEIRCALILVFTVTSTVRTLFSAWQGQLDAAVCVQAAIAVPVVVIATLLGRRFPPPFSPATTRRVAFGVLIGIGASLMLPAISAWVL.

8 helical membrane-spanning segments follow: residues 5–25 (LLLP…FQTV), 33–53 (IVMG…AAVV), 76–96 (AVAA…LVLE), 103–123 (ATLL…SAAL), 142–162 (VFGG…IFQF), 172–190 (IRCA…RTLF), 199–219 (AAVC…TLLG), and 236–256 (FGVL…AWVL).

The protein belongs to the 4-toluene sulfonate uptake permease (TSUP) (TC 2.A.102) family.

It localises to the cell inner membrane. Its function is as follows. Could be a sulfite/organosulfonate exporter with a wide substrate range, including 3-sulfolactate and 3-sulfopyruvate. In Cupriavidus necator (strain ATCC 17699 / DSM 428 / KCTC 22496 / NCIMB 10442 / H16 / Stanier 337) (Ralstonia eutropha), this protein is Probable sulfite/organosulfonate exporter TauE.